A 263-amino-acid chain; its full sequence is 4-hydroxy-tetrahydrodipicolinate reductase (263 aa).

NAD(+)-binding positions include 7–12 (GASGRM) and Asp33. Arg34 contacts NADP(+). Residues 96–98 (GTT) and 120–123 (APNM) each bind NAD(+). The Proton donor/acceptor role is filled by His153. His154 is a binding site for (S)-2,3,4,5-tetrahydrodipicolinate. Residue Lys157 is the Proton donor of the active site. Residue 163 to 164 (GT) participates in (S)-2,3,4,5-tetrahydrodipicolinate binding.

Belongs to the DapB family.

The protein resides in the cytoplasm. It carries out the reaction (S)-2,3,4,5-tetrahydrodipicolinate + NAD(+) + H2O = (2S,4S)-4-hydroxy-2,3,4,5-tetrahydrodipicolinate + NADH + H(+). The catalysed reaction is (S)-2,3,4,5-tetrahydrodipicolinate + NADP(+) + H2O = (2S,4S)-4-hydroxy-2,3,4,5-tetrahydrodipicolinate + NADPH + H(+). It participates in amino-acid biosynthesis; L-lysine biosynthesis via DAP pathway; (S)-tetrahydrodipicolinate from L-aspartate: step 4/4. Functionally, catalyzes the conversion of 4-hydroxy-tetrahydrodipicolinate (HTPA) to tetrahydrodipicolinate. The polypeptide is 4-hydroxy-tetrahydrodipicolinate reductase (Ralstonia nicotianae (strain ATCC BAA-1114 / GMI1000) (Ralstonia solanacearum)).